A 261-amino-acid chain; its full sequence is Cytochrome c oxidase subunit 3 (261 aa).

Over 1 to 15 (MAHQAHSYHMVDPSP) the chain is Mitochondrial matrix. Residues 16–34 (WPIFGAITALLTTSGLIMW) traverse the membrane as a helical segment. At 35–40 (FHYNSI) the chain is on the mitochondrial intermembrane side. Residues 41–66 (ALLTAGLLSMLLVMIQWWRDVVREST) traverse the membrane as a helical segment. Residues 67–72 (FQGHHT) lie on the Mitochondrial matrix side of the membrane. Residues 73–105 (PTVQKGLRYGMILFITSEAFFFLGFFWAFFHSS) traverse the membrane as a helical segment. Residues 106-128 (LAPTPELGGQWPPTGIKPLNPLE) lie on the Mitochondrial intermembrane side of the membrane. A helical membrane pass occupies residues 129 to 152 (VPLLNTAILLASGVTVTWAHHSIT). Residues 153-155 (EGN) are Mitochondrial matrix-facing. A helical transmembrane segment spans residues 156–183 (RKQAIHALTLTILLGFYFTALQAMEYHE). At 184–190 (ASFSIAD) the chain is on the mitochondrial intermembrane side. A helical transmembrane segment spans residues 191–223 (SVYGSTFFVATGFHGLHVIIGSSFLTICLLRLI). Topologically, residues 224–232 (KFHFTSNHH) are mitochondrial matrix. Residues 233 to 256 (FGFEAAAWYWHFVDIIWLFLYMSM) traverse the membrane as a helical segment. The Mitochondrial intermembrane segment spans residues 257 to 261 (YWWGS).

Belongs to the cytochrome c oxidase subunit 3 family. Component of the cytochrome c oxidase (complex IV, CIV), a multisubunit enzyme composed of 14 subunits. The complex is composed of a catalytic core of 3 subunits MT-CO1, MT-CO2 and MT-CO3, encoded in the mitochondrial DNA, and 11 supernumerary subunits COX4I, COX5A, COX5B, COX6A, COX6B, COX6C, COX7A, COX7B, COX7C, COX8 and NDUFA4, which are encoded in the nuclear genome. The complex exists as a monomer or a dimer and forms supercomplexes (SCs) in the inner mitochondrial membrane with NADH-ubiquinone oxidoreductase (complex I, CI) and ubiquinol-cytochrome c oxidoreductase (cytochrome b-c1 complex, complex III, CIII), resulting in different assemblies (supercomplex SCI(1)III(2)IV(1) and megacomplex MCI(2)III(2)IV(2)).

Its subcellular location is the mitochondrion inner membrane. The enzyme catalyses 4 Fe(II)-[cytochrome c] + O2 + 8 H(+)(in) = 4 Fe(III)-[cytochrome c] + 2 H2O + 4 H(+)(out). Functionally, component of the cytochrome c oxidase, the last enzyme in the mitochondrial electron transport chain which drives oxidative phosphorylation. The respiratory chain contains 3 multisubunit complexes succinate dehydrogenase (complex II, CII), ubiquinol-cytochrome c oxidoreductase (cytochrome b-c1 complex, complex III, CIII) and cytochrome c oxidase (complex IV, CIV), that cooperate to transfer electrons derived from NADH and succinate to molecular oxygen, creating an electrochemical gradient over the inner membrane that drives transmembrane transport and the ATP synthase. Cytochrome c oxidase is the component of the respiratory chain that catalyzes the reduction of oxygen to water. Electrons originating from reduced cytochrome c in the intermembrane space (IMS) are transferred via the dinuclear copper A center (CU(A)) of subunit 2 and heme A of subunit 1 to the active site in subunit 1, a binuclear center (BNC) formed by heme A3 and copper B (CU(B)). The BNC reduces molecular oxygen to 2 water molecules using 4 electrons from cytochrome c in the IMS and 4 protons from the mitochondrial matrix. This Coturnix japonica (Japanese quail) protein is Cytochrome c oxidase subunit 3 (MT-CO3).